A 153-amino-acid chain; its full sequence is Ribonuclease H (153 aa).

One can recognise an RNase H type-1 domain in the interval 1 to 142 (MTDQIEIFTD…ADELARRGVD (142 aa)). Mg(2+) is bound by residues aspartate 10, glutamate 48, aspartate 70, and aspartate 134.

The protein belongs to the RNase H family. Monomer. Requires Mg(2+) as cofactor.

Its subcellular location is the cytoplasm. It carries out the reaction Endonucleolytic cleavage to 5'-phosphomonoester.. Its function is as follows. Endonuclease that specifically degrades the RNA of RNA-DNA hybrids. This is Ribonuclease H from Aromatoleum aromaticum (strain DSM 19018 / LMG 30748 / EbN1) (Azoarcus sp. (strain EbN1)).